Reading from the N-terminus, the 453-residue chain is Ribulose bisphosphate carboxylase large chain (453 aa).

Positions 1–2 (MS) are excised as a propeptide. N-acetylproline is present on Pro3. Lys14 bears the N6,N6,N6-trimethyllysine mark. 2 residues coordinate substrate: Asn123 and Thr173. Lys175 (proton acceptor) is an active-site residue. Residue Lys177 participates in substrate binding. The Mg(2+) site is built by Lys201, Asp203, and Glu204. Position 201 is an N6-carboxylysine (Lys201). Residue His294 is the Proton acceptor of the active site. Substrate contacts are provided by Arg295, His327, and Ser379.

Belongs to the RuBisCO large chain family. Type I subfamily. As to quaternary structure, heterohexadecamer of 8 large chains and 8 small chains; disulfide-linked. The disulfide link is formed within the large subunit homodimers. Requires Mg(2+) as cofactor. In terms of processing, the disulfide bond which can form in the large chain dimeric partners within the hexadecamer appears to be associated with oxidative stress and protein turnover.

It is found in the plastid. The protein localises to the chloroplast. It catalyses the reaction 2 (2R)-3-phosphoglycerate + 2 H(+) = D-ribulose 1,5-bisphosphate + CO2 + H2O. It carries out the reaction D-ribulose 1,5-bisphosphate + O2 = 2-phosphoglycolate + (2R)-3-phosphoglycerate + 2 H(+). RuBisCO catalyzes two reactions: the carboxylation of D-ribulose 1,5-bisphosphate, the primary event in carbon dioxide fixation, as well as the oxidative fragmentation of the pentose substrate in the photorespiration process. Both reactions occur simultaneously and in competition at the same active site. The polypeptide is Ribulose bisphosphate carboxylase large chain (Galium lucidum).